A 248-amino-acid chain; its full sequence is Probable transcriptional regulatory protein LAR_0538 (248 aa).

The interval 1–22 (MSGHSKWHNIQGRKNAQDAKRG) is disordered.

It belongs to the TACO1 family.

The protein localises to the cytoplasm. In Limosilactobacillus reuteri subsp. reuteri (strain JCM 1112) (Lactobacillus reuteri), this protein is Probable transcriptional regulatory protein LAR_0538.